A 206-amino-acid polypeptide reads, in one-letter code: Small ribosomal subunit protein uS4 (206 aa).

The S4 RNA-binding domain maps to 93–156; it reads CRLDNLVYRL…RKIKIIAEAL (64 aa).

The protein belongs to the universal ribosomal protein uS4 family. In terms of assembly, part of the 30S ribosomal subunit. Contacts protein S5. The interaction surface between S4 and S5 is involved in control of translational fidelity.

Its function is as follows. One of the primary rRNA binding proteins, it binds directly to 16S rRNA where it nucleates assembly of the body of the 30S subunit. In terms of biological role, with S5 and S12 plays an important role in translational accuracy. This Protochlamydia amoebophila (strain UWE25) protein is Small ribosomal subunit protein uS4.